Here is a 554-residue protein sequence, read N- to C-terminus: Developmental and secondary metabolism regulator ve-1 (554 aa).

Positions G31–R230 constitute a Velvet domain. The Nuclear localization signal signature appears at L45–C50. Over residues T166–E175 the composition is skewed to basic and acidic residues. Disordered regions lie at residues T166 to F190, D232 to L430, and P465 to K528. The span at R276–D292 shows a compositional bias: polar residues. 2 stretches are compositionally biased toward pro residues: residues S363–Q372 and L485–Q494. A PEST region spans residues S455–P487. The span at R500–K528 shows a compositional bias: basic and acidic residues.

This sequence belongs to the velvet family. VeA subfamily. As to quaternary structure, component of the heterotrimeric velvet complex composed of lae-1, ve-1 and vel-2; Ve-1 acting as a bridging protein between lae-1 and vel-2.

It localises to the nucleus. It is found in the cytoplasm. Its function is as follows. Component of the velvet transcription factor complex that controls sexual/asexual developmental ratio in response to light, promoting sexual development in the darkness while stimulating asexual sporulation under illumination. The velvet complex hat acts as a global regulator for secondary metabolite gene expression. This is Developmental and secondary metabolism regulator ve-1 from Neurospora crassa (strain ATCC 24698 / 74-OR23-1A / CBS 708.71 / DSM 1257 / FGSC 987).